The primary structure comprises 403 residues: Keratin, type I cytoskeletal 19 (403 aa).

The interval 1–82 is head; that stretch reads MTSYSYRQTS…AVSDGLLSGN (82 aa). Position 7 is an omega-N-methylarginine (R7). Phosphoserine occurs at positions 14 and 22. Asymmetric dimethylarginine; alternate is present on R24. Omega-N-methylarginine; alternate is present on R24. S27 carries the post-translational modification Phosphoserine. R32 is modified (omega-N-methylarginine). Phosphoserine is present on residues S35 and S40. An omega-N-methylarginine mark is found at R43 and R51. S57 is modified (phosphoserine). R64 bears the Omega-N-methylarginine mark. Phosphoserine occurs at positions 67 and 75. The interval 83–118 is coil 1A; sequence EKITMQNLNDRLASYLDKVRALEQANGELEVKIRDW. Residues 83 to 394 form the IF rod domain; that stretch reads EKITMQNLND…SLLEGQEAHY (312 aa). Residues 119 to 136 form a linker 1 region; sequence YQKQGPGPSRDYNHYFKT. Residues 137–228 form a coil 1B region; it reads IEDLRDKILG…KNHEEEITAL (92 aa). The interval 229–251 is linker 12; sequence RSQVGGQVSVEVDSTPGVDLAKI. Positions 247 to 393 are necessary for interaction with PNN; sequence DLAKILSEMR…RSLLEGQEAH (147 aa). Residues 252–390 are coil 2; the sequence is LSEMRSQYEI…ATYRSLLEGQ (139 aa). T326 is subject to Phosphothreonine. The interval 391 to 403 is rod-like helical tail; that stretch reads EAHYNNLPTPKAI. The residue at position 394 (Y394) is a Phosphotyrosine.

Belongs to the intermediate filament family. In terms of assembly, heterotetramer of two type I and two type II keratins. Interacts with PNN and the actin-binding domain of DMD.

In terms of biological role, involved in the organization of myofibers. Together with KRT8, helps to link the contractile apparatus to dystrophin at the costameres of striated muscle. This Mus musculus (Mouse) protein is Keratin, type I cytoskeletal 19 (Krt19).